The primary structure comprises 440 residues: UDP-N-acetylglucosamine 1-carboxyvinyltransferase (440 aa).

Residue 22-23 (KN) coordinates phosphoenolpyruvate. Residue arginine 102 coordinates UDP-N-acetyl-alpha-D-glucosamine. Cysteine 126 functions as the Proton donor in the catalytic mechanism. Cysteine 126 carries the post-translational modification 2-(S-cysteinyl)pyruvic acid O-phosphothioketal. UDP-N-acetyl-alpha-D-glucosamine is bound by residues 131–135 (RPVDQ), aspartate 320, and isoleucine 342.

This sequence belongs to the EPSP synthase family. MurA subfamily.

It localises to the cytoplasm. The enzyme catalyses phosphoenolpyruvate + UDP-N-acetyl-alpha-D-glucosamine = UDP-N-acetyl-3-O-(1-carboxyvinyl)-alpha-D-glucosamine + phosphate. The protein operates within cell wall biogenesis; peptidoglycan biosynthesis. Functionally, cell wall formation. Adds enolpyruvyl to UDP-N-acetylglucosamine. The chain is UDP-N-acetylglucosamine 1-carboxyvinyltransferase from Acidovorax ebreus (strain TPSY) (Diaphorobacter sp. (strain TPSY)).